A 262-amino-acid chain; its full sequence is Acyl-[acyl-carrier-protein]--UDP-N-acetylglucosamine O-acyltransferase (262 aa).

It belongs to the transferase hexapeptide repeat family. LpxA subfamily. In terms of assembly, homotrimer.

The protein localises to the cytoplasm. It carries out the reaction a (3R)-hydroxyacyl-[ACP] + UDP-N-acetyl-alpha-D-glucosamine = a UDP-3-O-[(3R)-3-hydroxyacyl]-N-acetyl-alpha-D-glucosamine + holo-[ACP]. It functions in the pathway glycolipid biosynthesis; lipid IV(A) biosynthesis; lipid IV(A) from (3R)-3-hydroxytetradecanoyl-[acyl-carrier-protein] and UDP-N-acetyl-alpha-D-glucosamine: step 1/6. Functionally, involved in the biosynthesis of lipid A, a phosphorylated glycolipid that anchors the lipopolysaccharide to the outer membrane of the cell. In Psychromonas ingrahamii (strain DSM 17664 / CCUG 51855 / 37), this protein is Acyl-[acyl-carrier-protein]--UDP-N-acetylglucosamine O-acyltransferase.